We begin with the raw amino-acid sequence, 69 residues long: ATP synthase F(0) complex subunit e, mitochondrial (69 aa).

An N6-acetyllysine modification is found at Lys34.

This sequence belongs to the ATPase e subunit family. Component of the ATP synthase complex composed at least of ATP5F1A/subunit alpha, ATP5F1B/subunit beta, ATP5MC1/subunit c (homooctomer), MT-ATP6/subunit a, MT-ATP8/subunit 8, ATP5ME/subunit e, ATP5MF/subunit f, ATP5MG/subunit g, ATP5MK/subunit k, ATP5MJ/subunit j, ATP5F1C/subunit gamma, ATP5F1D/subunit delta, ATP5F1E/subunit epsilon, ATP5PF/subunit F6, ATP5PB/subunit b, ATP5PD/subunit d, ATP5PO/subunit OSCP. ATP synthase complex consists of a soluble F(1) head domain (subunits alpha(3) and beta(3)) - the catalytic core - and a membrane F(0) domain - the membrane proton channel (subunits c, a, 8, e, f, g, k and j). These two domains are linked by a central stalk (subunits gamma, delta, and epsilon) rotating inside the F1 region and a stationary peripheral stalk (subunits F6, b, d, and OSCP).

It localises to the mitochondrion. Its subcellular location is the mitochondrion inner membrane. Subunit e, of the mitochondrial membrane ATP synthase complex (F(1)F(0) ATP synthase or Complex V) that produces ATP from ADP in the presence of a proton gradient across the membrane which is generated by electron transport complexes of the respiratory chain. ATP synthase complex consist of a soluble F(1) head domain - the catalytic core - and a membrane F(1) domain - the membrane proton channel. These two domains are linked by a central stalk rotating inside the F(1) region and a stationary peripheral stalk. During catalysis, ATP synthesis in the catalytic domain of F(1) is coupled via a rotary mechanism of the central stalk subunits to proton translocation. In vivo, can only synthesize ATP although its ATP hydrolase activity can be activated artificially in vitro. Part of the complex F(0) domain. The sequence is that of ATP synthase F(0) complex subunit e, mitochondrial from Cricetulus longicaudatus (Long-tailed dwarf hamster).